We begin with the raw amino-acid sequence, 763 residues long: Heat shock 70 kDa protein 16 (763 aa).

Disordered regions lie at residues 509 to 529 (ISEE…PSSG) and 701 to 763 (EKTT…MELD). Position 528 is a phosphoserine (serine 528). The segment covering 701–714 (EKTTEQESLPKDAN) has biased composition (basic and acidic residues).

It belongs to the heat shock protein 70 (TC 1.A.33) family. HSP110/SSE subfamily.

This is Heat shock 70 kDa protein 16 (HSP70-16) from Arabidopsis thaliana (Mouse-ear cress).